The chain runs to 338 residues: Adenylosuccinate synthetase (338 aa).

GTP-binding positions include 12-18 (GDEGKGK) and 42-44 (GHT). The active-site Proton acceptor is the Asp13. Residues Asp13 and Gly42 each contribute to the Mg(2+) site. Residues 13 to 16 (DEGK), 40 to 43 (NAGH), Thr127, Arg141, Gln179, Thr194, and Arg256 contribute to the IMP site. The active-site Proton donor is His43. Residue 252–258 (TVTGRRR) participates in substrate binding. GTP-binding positions include Arg258, 284-286 (CLD), and 324-326 (STG).

Belongs to the adenylosuccinate synthetase family. Homodimer. Requires Mg(2+) as cofactor.

It is found in the cytoplasm. It carries out the reaction IMP + L-aspartate + GTP = N(6)-(1,2-dicarboxyethyl)-AMP + GDP + phosphate + 2 H(+). It participates in purine metabolism; AMP biosynthesis via de novo pathway; AMP from IMP: step 1/2. Its function is as follows. Plays an important role in the de novo pathway of purine nucleotide biosynthesis. Catalyzes the first committed step in the biosynthesis of AMP from IMP. This Methanococcus vannielii (strain ATCC 35089 / DSM 1224 / JCM 13029 / OCM 148 / SB) protein is Adenylosuccinate synthetase.